The sequence spans 337 residues: ERI1 exoribonuclease 3 (337 aa).

Positions 146–320 (FLVLDFEATC…DDCKNIANIM (175 aa)) constitute an Exonuclease domain. Mg(2+)-binding residues include Asp150, Glu152, and Asp249. Glu152 functions as the Proton acceptor in the catalytic mechanism. Glu152 is a binding site for AMP. The Proton acceptor role is filled by His307. His307 serves as a coordination point for AMP. Asp312 serves as a coordination point for Mg(2+).

In terms of assembly, interacts with PRNP. Mg(2+) serves as cofactor.

This chain is ERI1 exoribonuclease 3 (ERI3), found in Bos taurus (Bovine).